A 448-amino-acid chain; its full sequence is Adenylosuccinate synthetase (448 aa).

Residues 36–42 (GDEGKGK) and 64–66 (GHT) contribute to the GTP site. The Proton acceptor role is filled by aspartate 37. Residues aspartate 37 and glycine 64 each contribute to the Mg(2+) site. Residues 37-40 (DEGK), 62-65 (NAGH), threonine 154, arginine 168, asparagine 246, threonine 261, and arginine 325 contribute to the IMP site. Histidine 65 (proton donor) is an active-site residue. 321–327 (VTTKRKR) is a binding site for substrate. GTP-binding positions include arginine 327, 353–355 (KLD), and 436–438 (GVG).

Belongs to the adenylosuccinate synthetase family. In terms of assembly, homodimer. Mg(2+) serves as cofactor.

The protein localises to the cytoplasm. The catalysed reaction is IMP + L-aspartate + GTP = N(6)-(1,2-dicarboxyethyl)-AMP + GDP + phosphate + 2 H(+). It functions in the pathway purine metabolism; AMP biosynthesis via de novo pathway; AMP from IMP: step 1/2. In terms of biological role, plays an important role in the de novo pathway and in the salvage pathway of purine nucleotide biosynthesis. Catalyzes the first committed step in the biosynthesis of AMP from IMP. This chain is Adenylosuccinate synthetase, found in Drosophila persimilis (Fruit fly).